The primary structure comprises 796 residues: Exocyst complex component 3 (796 aa).

A coiled-coil region spans residues 87–174 (PQLKEKLREL…GTNTEKEQML (88 aa)).

Belongs to the SEC6 family. In terms of assembly, the exocyst complex is composed of sec-3/exoc1, sec-5/exoc2, sec-6/exoc3, sec-8/exoc4, sec-10/exoc5, sec-15/exoc6, exo-70/exoc7 and exo-84/exoc8.

Functionally, component of the exocyst complex involved in the docking of exocytic vesicles with fusion sites on the plasma membrane. The sequence is that of Exocyst complex component 3 (sec-6) from Caenorhabditis elegans.